A 231-amino-acid polypeptide reads, in one-letter code: Large ribosomal subunit protein uL1 (231 aa).

This sequence belongs to the universal ribosomal protein uL1 family. In terms of assembly, part of the 50S ribosomal subunit.

Functionally, binds directly to 23S rRNA. The L1 stalk is quite mobile in the ribosome, and is involved in E site tRNA release. Protein L1 is also a translational repressor protein, it controls the translation of the L11 operon by binding to its mRNA. The polypeptide is Large ribosomal subunit protein uL1 (Pseudomonas fluorescens (strain Pf0-1)).